Reading from the N-terminus, the 456-residue chain is Probable polygalacturonase At3g15720 (456 aa).

An N-terminal signal peptide occupies residues 1–23; that stretch reads MKKKTWFLNFSLFFLQIFTSSNA. PbH1 repeat units lie at residues 169-195, 196-217, 219-239, 249-270, 278-299, and 314-341; these read CNYV…DVGA, SSNV…AINS, TSNI…SIGS, VENV…RIKT, ARMI…IIDQ, and SSAV…DFRC. D210 functions as the Proton donor in the catalytic mechanism. The active site involves H233.

This sequence belongs to the glycosyl hydrolase 28 family.

Its subcellular location is the secreted. The protein resides in the cell wall. It carries out the reaction (1,4-alpha-D-galacturonosyl)n+m + H2O = (1,4-alpha-D-galacturonosyl)n + (1,4-alpha-D-galacturonosyl)m.. The polypeptide is Probable polygalacturonase At3g15720 (Arabidopsis thaliana (Mouse-ear cress)).